The following is an 802-amino-acid chain: Aldehyde dehydrogenase family 16 member A1 (802 aa).

Belongs to the aldehyde dehydrogenase family. As to quaternary structure, interacts with SPG21.

The polypeptide is Aldehyde dehydrogenase family 16 member A1 (Aldh16a1) (Mus musculus (Mouse)).